The following is a 957-amino-acid chain: PE-PGRS family protein PE_PGRS3 (957 aa).

The PE domain occupies 4-94; sequence VIAAPEVIAA…GAYAAAEAAA (91 aa). Residues 893–925 show a composition bias toward basic residues; that stretch reads CRRQRRADRQRRQRRQRRQSRGHARCRRHRRAA. The segment at 893-957 is disordered; the sequence is CRRQRRADRQ…GISCSPQMMP (65 aa).

This sequence belongs to the mycobacterial PE family. PGRS subfamily. A cleavage of the protein removes the N-terminal 120-150 residues, immediately upstream the PGRS domain. The exact position of the cleavage site could not be identified.

Its subcellular location is the cell outer membrane. The protein localises to the secreted. It is found in the cell wall. The protein resides in the cell surface. Functionally, the arginine-rich C-terminal region protrudes from the mycobacterial membrane and mediates M.tuberculosis entry into host epithelial cells. May serve as a bridge between mycobacteria and host cells by interacting with specific host phospholipids and extracting them from host cells, for their direct integration or as a source of phosphate, during phases of TB pathogenesis when M.tuberculosis is short of phosphate supply. The polypeptide is PE-PGRS family protein PE_PGRS3 (Mycobacterium tuberculosis (strain ATCC 25618 / H37Rv)).